The primary structure comprises 296 residues: Putative S-adenosyl-L-methionine-dependent methyltransferase MAP_3881 (296 aa).

Residues Asp-121 and 150–151 (DL) each bind S-adenosyl-L-methionine.

Belongs to the UPF0677 family.

Functionally, exhibits S-adenosyl-L-methionine-dependent methyltransferase activity. The chain is Putative S-adenosyl-L-methionine-dependent methyltransferase MAP_3881 from Mycolicibacterium paratuberculosis (strain ATCC BAA-968 / K-10) (Mycobacterium paratuberculosis).